The chain runs to 92 residues: PqqA binding protein (92 aa).

The protein belongs to the PqqD family. As to quaternary structure, monomer. Interacts with PqqE.

Its pathway is cofactor biosynthesis; pyrroloquinoline quinone biosynthesis. Functions as a PqqA binding protein and presents PqqA to PqqE, in the pyrroloquinoline quinone (PQQ) biosynthetic pathway. This Stutzerimonas stutzeri (strain A1501) (Pseudomonas stutzeri) protein is PqqA binding protein.